The primary structure comprises 275 residues: Nitrogenase iron protein 1 (275 aa).

9–16 (GKGGIGKS) provides a ligand contact to ATP. C98 is a [4Fe-4S] cluster binding site. At R101 the chain carries ADP-ribosylarginine; by dinitrogenase reductase ADP-ribosyltransferase. Position 132 (C132) interacts with [4Fe-4S] cluster.

Belongs to the NifH/BchL/ChlL family. In terms of assembly, homodimer. [4Fe-4S] cluster serves as cofactor. Post-translationally, the reversible ADP-ribosylation of Arg-101 inactivates the nitrogenase reductase and regulates nitrogenase activity.

It catalyses the reaction N2 + 8 reduced [2Fe-2S]-[ferredoxin] + 16 ATP + 16 H2O = H2 + 8 oxidized [2Fe-2S]-[ferredoxin] + 2 NH4(+) + 16 ADP + 16 phosphate + 6 H(+). Functionally, the key enzymatic reactions in nitrogen fixation are catalyzed by the nitrogenase complex, which has 2 components: the iron protein and the molybdenum-iron protein. The sequence is that of Nitrogenase iron protein 1 (nifH1) from Methanobacterium ivanovii.